The sequence spans 638 residues: Acetolactate synthase 1, chloroplastic (638 aa).

Residues 1 to 19 (MATAAAASTALTGATTAAP) show a composition bias toward low complexity. The interval 1-23 (MATAAAASTALTGATTAAPKARR) is disordered. A chloroplast-targeting transit peptide spans 1–39 (MATAAAASTALTGATTAAPKARRRAHLLATRRALAAPIR). Residue glutamate 112 coordinates thiamine diphosphate. Residues cysteine 132 and cysteine 278 are joined by a disulfide bond. Residues arginine 214, 320–341 (HGTVYANYAVDKADLLLALGVR), and 363–382 (DIDPAEIGKNKQPHVSICAD) contribute to the FAD site. Residues 455 to 535 (QHQMWAAQYY…VKVFVLNNQH (81 aa)) are thiamine pyrophosphate binding. Positions 506 and 533 each coordinate Mg(2+).

Belongs to the TPP enzyme family. The cofactor is Mg(2+). It depends on thiamine diphosphate as a cofactor.

The protein resides in the plastid. Its subcellular location is the chloroplast. The enzyme catalyses 2 pyruvate + H(+) = (2S)-2-acetolactate + CO2. The protein operates within amino-acid biosynthesis; L-isoleucine biosynthesis; L-isoleucine from 2-oxobutanoate: step 1/4. Its pathway is amino-acid biosynthesis; L-valine biosynthesis; L-valine from pyruvate: step 1/4. The sequence is that of Acetolactate synthase 1, chloroplastic (ALS1) from Zea mays (Maize).